The chain runs to 124 residues: Small ribosomal subunit protein uS12 (124 aa).

A 3-methylthioaspartic acid modification is found at Asp89. The disordered stretch occupies residues 105–124 (QGVKNRKQARSKYGAKMEKK).

This sequence belongs to the universal ribosomal protein uS12 family. Part of the 30S ribosomal subunit. Contacts proteins S8 and S17. May interact with IF1 in the 30S initiation complex.

Functionally, with S4 and S5 plays an important role in translational accuracy. In terms of biological role, interacts with and stabilizes bases of the 16S rRNA that are involved in tRNA selection in the A site and with the mRNA backbone. Located at the interface of the 30S and 50S subunits, it traverses the body of the 30S subunit contacting proteins on the other side and probably holding the rRNA structure together. The combined cluster of proteins S8, S12 and S17 appears to hold together the shoulder and platform of the 30S subunit. This chain is Small ribosomal subunit protein uS12, found in Renibacterium salmoninarum (strain ATCC 33209 / DSM 20767 / JCM 11484 / NBRC 15589 / NCIMB 2235).